The chain runs to 294 residues: Elongation factor Ts (294 aa).

The segment at 80 to 83 (TDFV) is involved in Mg(2+) ion dislocation from EF-Tu.

Belongs to the EF-Ts family.

It is found in the cytoplasm. Functionally, associates with the EF-Tu.GDP complex and induces the exchange of GDP to GTP. It remains bound to the aminoacyl-tRNA.EF-Tu.GTP complex up to the GTP hydrolysis stage on the ribosome. The polypeptide is Elongation factor Ts (Listeria innocua serovar 6a (strain ATCC BAA-680 / CLIP 11262)).